A 596-amino-acid polypeptide reads, in one-letter code: Elongation factor 4 (596 aa).

Residues 2 to 183 (KNIRNFSIIA…AIVDRIPAPV (182 aa)) form the tr-type G domain. GTP is bound by residues 14-19 (DHGKST) and 130-133 (NKID).

The protein belongs to the TRAFAC class translation factor GTPase superfamily. Classic translation factor GTPase family. LepA subfamily.

The protein resides in the cell inner membrane. It carries out the reaction GTP + H2O = GDP + phosphate + H(+). In terms of biological role, required for accurate and efficient protein synthesis under certain stress conditions. May act as a fidelity factor of the translation reaction, by catalyzing a one-codon backward translocation of tRNAs on improperly translocated ribosomes. Back-translocation proceeds from a post-translocation (POST) complex to a pre-translocation (PRE) complex, thus giving elongation factor G a second chance to translocate the tRNAs correctly. Binds to ribosomes in a GTP-dependent manner. The polypeptide is Elongation factor 4 (Sulfurimonas denitrificans (strain ATCC 33889 / DSM 1251) (Thiomicrospira denitrificans (strain ATCC 33889 / DSM 1251))).